Consider the following 134-residue polypeptide: MDTCHIAKSCVLILLVVLLCAERAQGLECYNCIGVPPETSCNTTTCPFSDGFCVALEIEVIVDSHRSKVKSNLCLPICPTTLDNTEITGNAVNVKTYCCKEDLCNAAVPTGGSSWTMAGVLLFSLVSVLLQTFL.

An N-terminal signal peptide occupies residues 1-26 (MDTCHIAKSCVLILLVVLLCAERAQG). The region spanning 27-118 (LECYNCIGVP…PTGGSSWTMA (92 aa)) is the UPAR/Ly6 domain. 5 cysteine pairs are disulfide-bonded: cysteine 29–cysteine 53, cysteine 32–cysteine 41, cysteine 46–cysteine 74, cysteine 78–cysteine 98, and cysteine 99–cysteine 104. Asparagine 105 carries GPI-anchor amidated asparagine lipidation. The propeptide at 106-134 (AAVPTGGSSWTMAGVLLFSLVSVLLQTFL) is removed in mature form.

Expressed in bone marrow.

It is found in the cell membrane. The chain is Lymphocyte antigen 6G (Ly6g) from Mus musculus (Mouse).